The primary structure comprises 368 residues: 4-hydroxy-3-methylbut-2-en-1-yl diphosphate synthase (flavodoxin) (368 aa).

Residues C271, C274, C306, and E313 each contribute to the [4Fe-4S] cluster site.

This sequence belongs to the IspG family. The cofactor is [4Fe-4S] cluster.

The enzyme catalyses (2E)-4-hydroxy-3-methylbut-2-enyl diphosphate + oxidized [flavodoxin] + H2O + 2 H(+) = 2-C-methyl-D-erythritol 2,4-cyclic diphosphate + reduced [flavodoxin]. The protein operates within isoprenoid biosynthesis; isopentenyl diphosphate biosynthesis via DXP pathway; isopentenyl diphosphate from 1-deoxy-D-xylulose 5-phosphate: step 5/6. Functionally, converts 2C-methyl-D-erythritol 2,4-cyclodiphosphate (ME-2,4cPP) into 1-hydroxy-2-methyl-2-(E)-butenyl 4-diphosphate. This chain is 4-hydroxy-3-methylbut-2-en-1-yl diphosphate synthase (flavodoxin), found in Buchnera aphidicola subsp. Acyrthosiphon pisum (strain APS) (Acyrthosiphon pisum symbiotic bacterium).